The primary structure comprises 720 residues: Neurochondrin (720 aa).

Belongs to the neurochondrin family.

Its subcellular location is the cytoplasm. The protein resides in the cytosol. It localises to the cell projection. It is found in the dendrite. The protein localises to the postsynapse. Functionally, probably involved in signal transduction, in the nervous system. Required for the spatial learning process. May also be involved in neurite outgrowth. The sequence is that of Neurochondrin (ncdn) from Xenopus laevis (African clawed frog).